The following is an 88-amino-acid chain: UPF0473 protein CLL_A1177 (88 aa).

The protein belongs to the UPF0473 family.

The sequence is that of UPF0473 protein CLL_A1177 from Clostridium botulinum (strain Eklund 17B / Type B).